Here is a 381-residue protein sequence, read N- to C-terminus: Pentatricopeptide repeat-containing protein 2, mitochondrial (381 aa).

One copy of the PPR repeat lies at Asp157–Leu191.

Belongs to the PTCD2 family.

It localises to the mitochondrion. Its function is as follows. Involved in mitochondrial RNA maturation and mitochondrial respiratory chain function. The polypeptide is Pentatricopeptide repeat-containing protein 2, mitochondrial (ptcd2) (Danio rerio (Zebrafish)).